A 161-amino-acid polypeptide reads, in one-letter code: Protein-export protein SecB (161 aa).

It belongs to the SecB family. Homotetramer, a dimer of dimers. One homotetramer interacts with 1 SecA dimer.

The protein localises to the cytoplasm. One of the proteins required for the normal export of preproteins out of the cell cytoplasm. It is a molecular chaperone that binds to a subset of precursor proteins, maintaining them in a translocation-competent state. It also specifically binds to its receptor SecA. The protein is Protein-export protein SecB of Shewanella putrefaciens (strain CN-32 / ATCC BAA-453).